A 491-amino-acid polypeptide reads, in one-letter code: Cobyric acid synthase (491 aa).

Residues 250-441 (DLQITVVRLP…LHGLFDNGPW (192 aa)) enclose the GATase cobBQ-type domain. Residue C331 is the Nucleophile of the active site. The active site involves H433.

The protein belongs to the CobB/CobQ family. CobQ subfamily.

It participates in cofactor biosynthesis; adenosylcobalamin biosynthesis. Its function is as follows. Catalyzes amidations at positions B, D, E, and G on adenosylcobyrinic A,C-diamide. NH(2) groups are provided by glutamine, and one molecule of ATP is hydrogenolyzed for each amidation. The protein is Cobyric acid synthase of Trichormus variabilis (strain ATCC 29413 / PCC 7937) (Anabaena variabilis).